The sequence spans 95 residues: Co-chaperonin GroES (95 aa).

It belongs to the GroES chaperonin family. In terms of assembly, heptamer of 7 subunits arranged in a ring. Interacts with the chaperonin GroEL.

It localises to the cytoplasm. Functionally, together with the chaperonin GroEL, plays an essential role in assisting protein folding. The GroEL-GroES system forms a nano-cage that allows encapsulation of the non-native substrate proteins and provides a physical environment optimized to promote and accelerate protein folding. GroES binds to the apical surface of the GroEL ring, thereby capping the opening of the GroEL channel. This is Co-chaperonin GroES from Chlorobaculum tepidum (strain ATCC 49652 / DSM 12025 / NBRC 103806 / TLS) (Chlorobium tepidum).